A 167-amino-acid chain; its full sequence is Schlafen-like protein (167 aa).

This sequence belongs to the Schlafen family. Subgroup poxviridae B3 subfamily.

In Bos taurus (Bovine), this protein is Schlafen-like protein.